The sequence spans 898 residues: Sodium/hydrogen exchanger 5 (898 aa).

At 1–3 (MLR) the chain is on the cytoplasmic side. A helical transmembrane segment spans residues 4–24 (VALLLLPGLPLAGVGATEEPT). Topologically, residues 25 to 47 (QEPGPLGEPPGLALFRWQWHEVE) are extracellular. The helical transmembrane segment at 48–68 (APYLVALWILVASLAKIVFHL) threads the bilayer. The Cytoplasmic segment spans residues 69 to 75 (SRKVTSL). Residues 76 to 96 (VPESCLLILLGLALGGIVLAV) form a helical membrane-spanning segment. Residues 97-136 (AKKAEYQLEPGTFFLFLLPPIVLDSGYFMPSRLFFDNLGA) are Extracellular-facing. A helical transmembrane segment spans residues 137–157 (ILTYAVVGTLWNAFTTGVALW). Topologically, residues 158–175 (GLQQAGLVAPRVQAGLLD) are cytoplasmic. A helical transmembrane segment spans residues 176–196 (FLLFGSLISAVDPVAVLAVFE). Residues 197–202 (EVHVNE) are Extracellular-facing. Residue Asn201 is glycosylated (N-linked (GlcNAc...) asparagine). A helical membrane pass occupies residues 203–223 (TLFIIVFGESLLNDAVTVVLY). Residues 224-248 (KVCNSFVEMGSANVQATDYLKGVAS) are Cytoplasmic-facing. The helical transmembrane segment at 249–269 (LFVVSLGGAAVGLVFAFLLAL) threads the bilayer. The Extracellular segment spans residues 270 to 278 (TTRFTKRVR). The chain crosses the membrane as a helical span at residues 279–299 (IIEPLLVFLLAYAAYLTAEMA). The Cytoplasmic portion of the chain corresponds to 300–333 (SLSAILAVTMCGLGCKKYVEANISHKSRTAVKYT). A helical transmembrane segment spans residues 334 to 354 (MKTLASSAETVIFMLLGISAV). The Extracellular segment spans residues 355-362 (DSSKWAWD). The helical transmembrane segment at 363-383 (SGLVLGTLFFILFFRALGVVL) threads the bilayer. The Cytoplasmic portion of the chain corresponds to 384-400 (QTWVLNQFRLVPLDKID). A helical transmembrane segment spans residues 401–421 (QVVMSYGGLRGAVAFALVILL). The Extracellular portion of the chain corresponds to 422 to 430 (DRTKVPAKD). A helical transmembrane segment spans residues 431-451 (YFVATTIVVVFFTVIVQGLTI). At 452-898 (KPLVKWLRVK…CIQFNRGGRL (447 aa)) the chain is on the cytoplasmic side. Disordered stretches follow at residues 660–692 (TKSK…RDLG) and 801–888 (ESLA…NSHW). Basic residues predominate over residues 662-674 (SKPRPRKTGHKKK). Over residues 856-867 (ESSADIPQQQEL) the composition is skewed to polar residues.

Belongs to the monovalent cation:proton antiporter 1 (CPA1) transporter (TC 2.A.36) family. Interacts with CHP1 and CHP2. Interacts with ARRB2; facilitates the endocytosis of SLC9A5 from the plasma membrane. Interacts with RACK1; this interaction positively regulates SLC9A5 activity and promotes SLC9A5 localization to focal adhesions. Interacts with SCAMP2; this interaction regulates SLC9A5 cell-surface targeting and SLC9A5 activity. Phosphorylated by PRKAA2; promotes its accumulation at the cell surface. Phosphorylated by CSNK2A1 in a manner favoring its beta-arrestin binding and endocytosis. Highly expressed in brain. Strongly expressed in the dentate gyrus.

It localises to the cell membrane. The protein localises to the recycling endosome membrane. It is found in the cell projection. Its subcellular location is the dendritic spine membrane. The protein resides in the synaptic cell membrane. It localises to the cell junction. The protein localises to the focal adhesion. It carries out the reaction Na(+)(in) + H(+)(out) = Na(+)(out) + H(+)(in). In terms of biological role, plasma membrane Na(+)/H(+) antiporter. Mediates the electroneutral exchange of intracellular H(+) ions for extracellular Na(+) in 1:1 stoichiometry. Responsible for regulating intracellular pH homeostasis, in particular in neural tissues. Acts as a negative regulator of dendritic spine growth. Plays a role in postsynaptic remodeling and signaling. Can also contribute to organellar pH regulation, with consequences for receptor tyrosine kinase trafficking. This is Sodium/hydrogen exchanger 5 (Slc9a5) from Rattus norvegicus (Rat).